A 159-amino-acid polypeptide reads, in one-letter code: uncharacterized protein (159 aa).

It belongs to the IIV-6 136R family.

This is an uncharacterized protein from Invertebrate iridescent virus 3 (IIV-3).